The sequence spans 244 residues: MNIDLNADLGEGCASDSELLTLVSSANIASGFHAGDAQTMLTCVREALKNGVAIGAHPSFPDRDNFGRTAMVLPPETVYAQTLYQIGALGAIVQAQGGVMRHVKPHGMLYNQAAKDPRLAQAIAKAVHDYDPSLILVGLAGSELIRAGERCRLVTRQEVFADRGYQADGSLVPRMQPGALIHDEEQALAQTLDMVQAGRVKSVTGVWTTVTAQTVCIHGDGEYALAFARRLRAAFNARNIHVIA.

The protein belongs to the LamB/PxpA family. Forms a complex composed of PxpA, PxpB and PxpC.

It carries out the reaction 5-oxo-L-proline + ATP + 2 H2O = L-glutamate + ADP + phosphate + H(+). In terms of biological role, catalyzes the cleavage of 5-oxoproline to form L-glutamate coupled to the hydrolysis of ATP to ADP and inorganic phosphate. The protein is 5-oxoprolinase subunit A of Salmonella paratyphi A (strain ATCC 9150 / SARB42).